We begin with the raw amino-acid sequence, 706 residues long: F-box/WD repeat-containing protein 7 (706 aa).

The disordered stretch occupies residues 1–157 (MNQELLSVGS…IVDLPIHQRS (157 aa)). A Phosphoserine modification is found at serine 26. Basic and acidic residues predominate over residues 32-54 (QMNRVLEEEQQQPRHQEEEHAAR). Residues 69–83 (NDPQQGQLEENNNRF) are compositionally biased toward polar residues. Residues 86-128 (VDEDSSGNQEEQEEDEEHAGEQDEEDEEEEEMDQESDDFDQSD) show a composition bias toward acidic residues. Over residues 129-138 (DSSREDEHTH) the composition is skewed to basic and acidic residues. At threonine 204 the chain carries Phosphothreonine. Phosphoserine is present on serine 226. The 47-residue stretch at 277–323 (RDFISLLPKELALYVLSFLEPKDLLQAAQTCRYWRILAEDNLLWREK) folds into the F-box domain. WD repeat units lie at residues 377–417 (GHDD…RTLV), 419–455 (HTGG…CIHT), 458–497 (GHTS…HVLM), 499–535 (HVAA…CLHT), 538–577 (GHTN…HTLT), 579–617 (HQSL…QTLQ), and 621–658 (KHQS…FIRN).

Homodimer; homodimerization plays a role in substrate binding and/or ubiquitination and degradation. Component of the SCF(FBXW7) complex consisting of CUL1, RBX1, SKP1 and FBXW7. Interacts (via F-box domain) with SKP1. Interacts (via F-box domain) with pseudophosphatase STYX; the interaction is direct and prevents FBXW7 interaction with SKP1. Interacts with cyclin-E (CCNE1 or CCNE2). Interacts with PSEN1. Forms a trimeric complex with NOTCH1 and SGK1. Interacts with NOTCH1 intracellular domain/NICD and NOTCH4 intracellular domain/NICD. Interacts with NOTCH2 intracellular domain (N2ICD). Interacts with MYC (when phosphorylated). Interacts with USP28, counteracting ubiquitination of MYC. Interacts with JUN. Found in a complex with JUN and PRR7. Interacts with JUN and PRR7; the interaction inhibits ubiquitination-mediated JUN degradation, promoting its phosphorylation and transcriptional activity. Interacts (when phosphorylated at Thr-204) with PIN1, disrupting FBXW7 dimerization and promoting FBXW7 autoubiquitination and degradation. Interacts with UBE2QL1. Interacts with FAM83D; promotes FBXW7 degradation. Interacts with MYCN; FBXW7 competes with AURKA for binding to unphosphorylated MYCN but not for binding to phosphorylated MYCN. Interacts with STOML1. Interacts with NFE2L1. Interacts with USP36, counteracting ubiquitination of MYC. Interacts with RICTOR; mediates RICTOR ubiquitination and degradation.l Interacts with USP38, counteracting ubiquitination of MYC. As to quaternary structure, (Microbial infection) In case of infection, interacts with T.annulata PIN1 (TaPIN1); leading to FBXW7 autoubiquitination and subsequent degradation: FBXW7 degradation promotes stabilization of JUN, which promotes cell transformation. In terms of processing, phosphorylation at Thr-204 promotes interaction with PIN1, leading to disrupt FBXW7 dimerization and promoting FBXW7 autoubiquitination and degradation. Phosphorylated by ATM at Ser-26 in response to DNA damage, promoting recruitment to DNA damage sites and 'Lys-63'-linked ubiquitination of phosphorylated XRCC4. Ubiquitinated: autoubiquitinates following phosphorylation at Thr-204 and subsequent interaction with PIN1. Ubiquitination leads to its degradation.

The protein resides in the nucleus. It localises to the nucleoplasm. It is found in the chromosome. It functions in the pathway protein modification; protein ubiquitination. In terms of biological role, substrate recognition component of a SCF (SKP1-CUL1-F-box protein) E3 ubiquitin-protein ligase complex which mediates the ubiquitination and subsequent proteasomal degradation of target proteins. Recognizes and binds phosphorylated sites/phosphodegrons within target proteins and thereafter brings them to the SCF complex for ubiquitination. Identified substrates include cyclin-E (CCNE1 or CCNE2), DISC1, JUN, MYC, NOTCH1 released notch intracellular domain (NICD), NOTCH2, MCL1, MLST8, RICTOR, and probably PSEN1. Acts as a negative regulator of JNK signaling by binding to phosphorylated JUN and promoting its ubiquitination and subsequent degradation. SCF(FBXW7) complex mediates the ubiquitination and subsequent degradation of NFE2L1. Involved in bone homeostasis and negative regulation of osteoclast differentiation. Also able to promote 'Lys-63'-linked ubiquitination in response to DNA damage. The SCF(FBXW7) complex facilitates double-strand break repair following phosphorylation by ATM: phosphorylation promotes localization to sites of double-strand breaks and 'Lys-63'-linked ubiquitination of phosphorylated XRCC4, enhancing DNA non-homologous end joining. This chain is F-box/WD repeat-containing protein 7, found in Bos taurus (Bovine).